A 229-amino-acid chain; its full sequence is Molybdenum transport system permease protein ModB (229 aa).

The Periplasmic portion of the chain corresponds to methionine 1–lysine 16. The region spanning valine 11 to leucine 219 is the ABC transmembrane type-1 domain. A helical transmembrane segment spans residues valine 17–valine 37. The Cytoplasmic portion of the chain corresponds to arginine 38–serine 49. The helical transmembrane segment at valine 50–methionine 70 threads the bilayer. The Periplasmic segment spans residues glycine 71–tryptophan 83. A helical membrane pass occupies residues phenylalanine 84–phenylalanine 104. The Cytoplasmic segment spans residues proline 105–valine 136. A helical transmembrane segment spans residues phenylalanine 137 to phenylalanine 157. Over alanine 158 to leucine 201 the chain is Periplasmic. The chain crosses the membrane as a helical span at residues cysteine 202–isoleucine 222. Over serine 223–arginine 229 the chain is Cytoplasmic.

Belongs to the binding-protein-dependent transport system permease family. CysTW subfamily.

Its subcellular location is the cell inner membrane. Functionally, part of the binding-protein-dependent transport system for molybdenum; probably responsible for the translocation of the substrate across the membrane. This Escherichia coli O157:H7 protein is Molybdenum transport system permease protein ModB (modB).